The primary structure comprises 256 residues: Zinc metalloprotease (256 aa).

The active-site Proton donor is the His74.

This sequence belongs to the peptidase M4 family. Zn(2+) serves as cofactor.

Its subcellular location is the secreted. Its function is as follows. May play a role in ulcer formation. Proteolytic digestion of gastric mucus has been suggested as an important mechanism by which its pathogenicity is at least partly exerted. The chain is Zinc metalloprotease (hap) from Helicobacter pylori (Campylobacter pylori).